The primary structure comprises 121 residues: Large ribosomal subunit protein uL18 (121 aa).

Belongs to the universal ribosomal protein uL18 family. Part of the 50S ribosomal subunit; part of the 5S rRNA/L5/L18/L25 subcomplex. Contacts the 5S and 23S rRNAs.

In terms of biological role, this is one of the proteins that bind and probably mediate the attachment of the 5S RNA into the large ribosomal subunit, where it forms part of the central protuberance. In Acidovorax ebreus (strain TPSY) (Diaphorobacter sp. (strain TPSY)), this protein is Large ribosomal subunit protein uL18.